A 277-amino-acid polypeptide reads, in one-letter code: Homeobox protein Nkx-6.2 (277 aa).

The interval 89–142 (AGVYFGPAAAVARGYPKPLAELPGRPPIFWPGVVQGAPWRDPRLAGPAPAGGVL) is repressor domain. Disordered regions lie at residues 132-155 (LAGP…RPTF) and 210-250 (EMAS…DDEK). The segment at residues 148–207 (KKHSRPTFSGQQIFALEKTFEQTKYLAGPERARLAYSLGMTESQVKVWFQNRRTKWRKRH) is a DNA-binding region (homeobox). A compositionally biased stretch (basic and acidic residues) spans 216-226 (KKQDSDAEKLK).

As to expression, highest expression in brain.

Its subcellular location is the nucleus. In terms of biological role, transcription factor with repressor activity involved in the regulation of axon-glial interactions at myelin paranodes in oligodendrocytes. Binds to the consensus DNA sequence 5'-(A/T)TTAATGA-3'. In oligodendrocytes, binds to MBP and PLP1 promoter regions. The chain is Homeobox protein Nkx-6.2 (NKX6-2) from Homo sapiens (Human).